Here is a 225-residue protein sequence, read N- to C-terminus: PKHD-type hydroxylase YbiX (225 aa).

Residues 78 to 177 form the Fe2OG dioxygenase domain; the sequence is TLSTPLFNRY…RVASFMWIQS (100 aa). Residues H96, D98, and H158 each coordinate Fe cation. R168 provides a ligand contact to 2-oxoglutarate.

Requires Fe(2+) as cofactor. L-ascorbate is required as a cofactor.

This is PKHD-type hydroxylase YbiX from Escherichia coli O17:K52:H18 (strain UMN026 / ExPEC).